A 79-amino-acid chain; its full sequence is Sec-independent protein translocase protein TatA (79 aa).

The chain crosses the membrane as a helical span at residues 1 to 21; that stretch reads MGGWSSPSHWLIILLIVVLLF. The segment covering 49–61 has biased composition (basic and acidic residues); it reads EVAKNTQKIEENK. Residues 49–79 are disordered; the sequence is EVAKNTQKIEENKNTTNNTNADASIDETKKA.

The protein belongs to the TatA/E family. In terms of assembly, the Tat system comprises two distinct complexes: a TatABC complex, containing multiple copies of TatA, TatB and TatC subunits, and a separate TatA complex, containing only TatA subunits. Substrates initially bind to the TatABC complex, which probably triggers association of the separate TatA complex to form the active translocon.

It localises to the cell inner membrane. Its function is as follows. Part of the twin-arginine translocation (Tat) system that transports large folded proteins containing a characteristic twin-arginine motif in their signal peptide across membranes. TatA could form the protein-conducting channel of the Tat system. This chain is Sec-independent protein translocase protein TatA, found in Campylobacter jejuni subsp. doylei (strain ATCC BAA-1458 / RM4099 / 269.97).